The chain runs to 852 residues: Tiger protein I3 (852 aa).

The first 18 residues, 1–18, serve as a signal peptide directing secretion; it reads MKILLFFILFYLFSFSIS. The Extracellular portion of the chain corresponds to 19 to 830; it reads YDEVIPLGYE…DVHQYSDARN (812 aa). Asparagine 31, asparagine 47, asparagine 67, asparagine 97, asparagine 129, asparagine 201, asparagine 215, asparagine 228, asparagine 260, asparagine 323, asparagine 352, asparagine 356, asparagine 404, asparagine 441, asparagine 476, asparagine 483, asparagine 501, asparagine 512, asparagine 574, asparagine 592, asparagine 635, asparagine 658, asparagine 661, asparagine 679, asparagine 680, asparagine 723, asparagine 757, asparagine 761, asparagine 773, asparagine 785, and asparagine 800 each carry an N-linked (GlcNAc...) asparagine glycan. In terms of domain architecture, IPT/TIG spans 290–367; that stretch reads IPSIVNSIPK…SSPIAVSIND (78 aa). Residues 831 to 851 traverse the membrane as a helical segment; that stretch reads IFQNLLLSILIIIIISLFISN. Isoleucine 852 is a topological domain (cytoplasmic).

It localises to the membrane. The protein is Tiger protein I3 (tgrI3) of Dictyostelium discoideum (Social amoeba).